Here is a 165-residue protein sequence, read N- to C-terminus: Protein SprT (165 aa).

One can recognise a SprT-like domain in the interval 10-157 (EACYRQAEDF…YCRRCKATLV (148 aa)). Histidine 69 provides a ligand contact to Zn(2+). Residue glutamate 70 is part of the active site. Histidine 73 contacts Zn(2+).

This sequence belongs to the SprT family. Requires Zn(2+) as cofactor.

It is found in the cytoplasm. The sequence is that of Protein SprT from Pseudomonas paraeruginosa (strain DSM 24068 / PA7) (Pseudomonas aeruginosa (strain PA7)).